The chain runs to 312 residues: DNA-directed RNA polymerase subunit alpha (312 aa).

The segment at 1–229 (MLQYQIERID…ELFQPLATVT (229 aa)) is alpha N-terminal domain (alpha-NTD). The tract at residues 240 to 312 (PSPEAQIPLE…ISIPQSRTSV (73 aa)) is alpha C-terminal domain (alpha-CTD).

Belongs to the RNA polymerase alpha chain family. In terms of assembly, in cyanobacteria the RNAP catalytic core is composed of 2 alpha, 1 beta, 1 beta', 1 gamma and 1 omega subunit. When a sigma factor is associated with the core the holoenzyme is formed, which can initiate transcription.

The enzyme catalyses RNA(n) + a ribonucleoside 5'-triphosphate = RNA(n+1) + diphosphate. DNA-dependent RNA polymerase catalyzes the transcription of DNA into RNA using the four ribonucleoside triphosphates as substrates. The protein is DNA-directed RNA polymerase subunit alpha of Prochlorococcus marinus (strain MIT 9301).